A 101-amino-acid polypeptide reads, in one-letter code: UPF0235 protein MmarC5_0538 (101 aa).

This sequence belongs to the UPF0235 family.

The protein is UPF0235 protein MmarC5_0538 of Methanococcus maripaludis (strain C5 / ATCC BAA-1333).